Reading from the N-terminus, the 192-residue chain is U1 small nuclear ribonucleoprotein C (192 aa).

A Matrin-type zinc finger spans residues 4-36; that stretch reads YYCEYCDIYLTHSSPVGRRQHNQGRKHISAKIE. Residues 118-192 form a disordered region; that stretch reads PGANKYPNNN…FVNKNSEQPN (75 aa). Positions 133-154 are enriched in polar residues; that stretch reads RISNTPKPYNNYTNKPITNSPY. A compositionally biased stretch (low complexity) spans 164–173; sequence NNENSNNFSN. Residues 174-192 are compositionally biased toward polar residues; that stretch reads YQMNKDNSNFVNKNSEQPN.

This sequence belongs to the U1 small nuclear ribonucleoprotein C family. In terms of assembly, U1 snRNP is composed of the 7 core Sm proteins B/B', D1, D2, D3, E, F and G that assemble in a heptameric protein ring on the Sm site of the small nuclear RNA to form the core snRNP, and at least 3 U1 snRNP-specific proteins U1-70K, U1-A and U1-C. U1-C interacts with U1 snRNA and the 5' splice-site region of the pre-mRNA.

It localises to the nucleus. Component of the spliceosomal U1 snRNP, which is essential for recognition of the pre-mRNA 5' splice-site and the subsequent assembly of the spliceosome. U1-C is directly involved in initial 5' splice-site recognition for both constitutive and regulated alternative splicing. The interaction with the 5' splice-site seems to precede base-pairing between the pre-mRNA and the U1 snRNA. Stimulates commitment or early (E) complex formation by stabilizing the base pairing of the 5' end of the U1 snRNA and the 5' splice-site region. In Plasmodium chabaudi chabaudi, this protein is U1 small nuclear ribonucleoprotein C.